Consider the following 349-residue polypeptide: Very-long-chain 3-oxoacyl-CoA reductase (349 aa).

A helical membrane pass occupies residues 19 to 39 (AIIFALLLGVFKLTVFSLKFA). 7 residues coordinate NADP(+): Val-65, Asp-119, Asn-146, Tyr-221, Lys-225, Val-254, and Ser-256. Tyr-221 acts as the Proton donor in catalysis. The active-site Lowers pKa of active site Tyr is the Lys-225.

This sequence belongs to the short-chain dehydrogenases/reductases (SDR) family.

It localises to the endoplasmic reticulum membrane. It carries out the reaction a very-long-chain (3R)-3-hydroxyacyl-CoA + NADP(+) = a very-long-chain 3-oxoacyl-CoA + NADPH + H(+). It participates in lipid metabolism; fatty acid biosynthesis. Functionally, component of the microsomal membrane bound fatty acid elongation system, which produces the 26-carbon very long-chain fatty acids (VLCFA) from palmitate. Catalyzes the reduction of the 3-ketoacyl-CoA intermediate that is formed in each cycle of fatty acid elongation. VLCFAs serve as precursors for ceramide and sphingolipids. This is Very-long-chain 3-oxoacyl-CoA reductase from Candida albicans (strain SC5314 / ATCC MYA-2876) (Yeast).